Consider the following 187-residue polypeptide: UPF0301 protein LPC_2717 (187 aa).

It belongs to the UPF0301 (AlgH) family.

This is UPF0301 protein LPC_2717 from Legionella pneumophila (strain Corby).